Here is a 600-residue protein sequence, read N- to C-terminus: Elongation factor 4 (600 aa).

The tr-type G domain occupies 6–188 (QFIRNFSIIA…QITKQIPSPK (183 aa)). Residues 18–23 (DHGKST) and 135–138 (NKID) contribute to the GTP site.

It belongs to the TRAFAC class translation factor GTPase superfamily. Classic translation factor GTPase family. LepA subfamily.

The protein localises to the cell inner membrane. The enzyme catalyses GTP + H2O = GDP + phosphate + H(+). Required for accurate and efficient protein synthesis under certain stress conditions. May act as a fidelity factor of the translation reaction, by catalyzing a one-codon backward translocation of tRNAs on improperly translocated ribosomes. Back-translocation proceeds from a post-translocation (POST) complex to a pre-translocation (PRE) complex, thus giving elongation factor G a second chance to translocate the tRNAs correctly. Binds to ribosomes in a GTP-dependent manner. The protein is Elongation factor 4 of Leptospira interrogans serogroup Icterohaemorrhagiae serovar copenhageni (strain Fiocruz L1-130).